The chain runs to 267 residues: Eukaryotic translation initiation factor 3 subunit J (267 aa).

Disordered stretches follow at residues 1 to 118 (MAPS…DLKH) and 221 to 241 (MREERAADKGNKKTKAAKTKV). Over residues 28–46 (DEEEEDVLDSWDAAEDSEV) the composition is skewed to acidic residues. Residues 44-99 (SEVEREKAAKAAAAAAKAEAEAAAKKKSKAQRIEERKQERKKLAEANESDEDSEED) adopt a coiled-coil conformation. Positions 74-88 (QRIEERKQERKKLAE) are enriched in basic and acidic residues. The span at 90–100 (NESDEDSEEDE) shows a compositional bias: acidic residues. Basic and acidic residues-rich tracts occupy residues 108–118 (RRTEKEGDLKH) and 221–231 (MREERAADKGN).

Belongs to the eIF-3 subunit J family. Component of the eukaryotic translation initiation factor 3 (eIF-3) complex.

It is found in the cytoplasm. Its function is as follows. Component of the eukaryotic translation initiation factor 3 (eIF-3) complex, which is involved in protein synthesis of a specialized repertoire of mRNAs and, together with other initiation factors, stimulates binding of mRNA and methionyl-tRNAi to the 40S ribosome. The eIF-3 complex specifically targets and initiates translation of a subset of mRNAs involved in cell proliferation. The polypeptide is Eukaryotic translation initiation factor 3 subunit J (hcr1) (Aspergillus fumigatus (strain CBS 144.89 / FGSC A1163 / CEA10) (Neosartorya fumigata)).